Consider the following 631-residue polypeptide: 1-deoxy-D-xylulose-5-phosphate synthase (631 aa).

Residues H87 and 128-130 each bind thiamine diphosphate; that span reads GHS. D159 provides a ligand contact to Mg(2+). Residues 160-161, N188, F295, and E378 each bind thiamine diphosphate; that span reads GA. N188 provides a ligand contact to Mg(2+).

The protein belongs to the transketolase family. DXPS subfamily. Homodimer. It depends on Mg(2+) as a cofactor. Thiamine diphosphate is required as a cofactor.

It carries out the reaction D-glyceraldehyde 3-phosphate + pyruvate + H(+) = 1-deoxy-D-xylulose 5-phosphate + CO2. It functions in the pathway metabolic intermediate biosynthesis; 1-deoxy-D-xylulose 5-phosphate biosynthesis; 1-deoxy-D-xylulose 5-phosphate from D-glyceraldehyde 3-phosphate and pyruvate: step 1/1. In terms of biological role, catalyzes the acyloin condensation reaction between C atoms 2 and 3 of pyruvate and glyceraldehyde 3-phosphate to yield 1-deoxy-D-xylulose-5-phosphate (DXP). The chain is 1-deoxy-D-xylulose-5-phosphate synthase from Pseudomonas syringae pv. tomato (strain ATCC BAA-871 / DC3000).